Reading from the N-terminus, the 381-residue chain is Anhydro-N-acetylmuramic acid kinase (381 aa).

22–29 lines the ATP pocket; sequence GTSIDGID.

It belongs to the anhydro-N-acetylmuramic acid kinase family.

The enzyme catalyses 1,6-anhydro-N-acetyl-beta-muramate + ATP + H2O = N-acetyl-D-muramate 6-phosphate + ADP + H(+). The protein operates within amino-sugar metabolism; 1,6-anhydro-N-acetylmuramate degradation. It participates in cell wall biogenesis; peptidoglycan recycling. In terms of biological role, catalyzes the specific phosphorylation of 1,6-anhydro-N-acetylmuramic acid (anhMurNAc) with the simultaneous cleavage of the 1,6-anhydro ring, generating MurNAc-6-P. Is required for the utilization of anhMurNAc either imported from the medium or derived from its own cell wall murein, and thus plays a role in cell wall recycling. This chain is Anhydro-N-acetylmuramic acid kinase, found in Xylella fastidiosa (strain Temecula1 / ATCC 700964).